The following is a 473-amino-acid chain: MAIFYKPSKGKNKSNVKGRVRGAGSGEKQHIVKTKQSWPSVDDINAANEAVTIDGMDWQGQGVARGDTLYFVDGALPGETVEIKALSSNKQIVNAKVTKVNTPSEHRQKPFCGVANQCGGCQLQHVEPQEALALRDDALKSMFQRKLGFNEGAWQAPVSGNRPRYRRKARLAIDARNPDKIKLGFRENAGKNIVDIEGCPVLVESLSQLIAPLKSAITGYASARLVGHVSLLAGENAVQVTVKHTRSLANDFIASLSQFAVEQNVNMTIEDGNGEFTHLHEIAPITCNTVDGFYLQPGPNDFVQVNAEVNTKMVAQALSWLAPKAGERIADWFSGLGNFTLPIANSGATVSAVEGVAEMVQRAKSNALEQGITNVDWMQLDLADEKSVDKALAGGFDKVLLDPSREGALTVCHALVRATPNTIVYVSCNPNTFSRDARVLIDGGYQMQKAGVVEMFPFTHHMETMALFTRQQQ.

Residues 6 to 27 (KPSKGKNKSNVKGRVRGAGSGE) are disordered. Positions 8 to 20 (SKGKNKSNVKGRV) are enriched in basic residues. The 58-residue stretch at 42-99 (DDINAANEAVTIDGMDWQGQGVARGDTLYFVDGALPGETVEIKALSSNKQIVNAKVTK) folds into the TRAM domain. 4 residues coordinate [4Fe-4S] cluster: Cys112, Cys118, Cys121, and Cys199. S-adenosyl-L-methionine-binding residues include Gln304, Phe333, Asn338, Glu354, Asp381, and Asp402. Cys428 functions as the Nucleophile in the catalytic mechanism.

This sequence belongs to the class I-like SAM-binding methyltransferase superfamily. RNA M5U methyltransferase family. RlmD subfamily.

The enzyme catalyses uridine(1939) in 23S rRNA + S-adenosyl-L-methionine = 5-methyluridine(1939) in 23S rRNA + S-adenosyl-L-homocysteine + H(+). Its function is as follows. Catalyzes the formation of 5-methyl-uridine at position 1939 (m5U1939) in 23S rRNA. This Alteromonas naphthalenivorans protein is 23S rRNA (uracil(1939)-C(5))-methyltransferase RlmD.